Consider the following 231-residue polypeptide: 5'-methylthioadenosine/S-adenosylhomocysteine nucleosidase (231 aa).

The active-site Proton acceptor is the glutamate 12. Substrate-binding positions include glycine 78, valine 153, and 174–175 (ME). Residue aspartate 198 is the Proton donor of the active site.

This sequence belongs to the PNP/UDP phosphorylase family. MtnN subfamily.

The enzyme catalyses S-adenosyl-L-homocysteine + H2O = S-(5-deoxy-D-ribos-5-yl)-L-homocysteine + adenine. It carries out the reaction S-methyl-5'-thioadenosine + H2O = 5-(methylsulfanyl)-D-ribose + adenine. It catalyses the reaction 5'-deoxyadenosine + H2O = 5-deoxy-D-ribose + adenine. Its pathway is amino-acid biosynthesis; L-methionine biosynthesis via salvage pathway; S-methyl-5-thio-alpha-D-ribose 1-phosphate from S-methyl-5'-thioadenosine (hydrolase route): step 1/2. Its function is as follows. Catalyzes the irreversible cleavage of the glycosidic bond in both 5'-methylthioadenosine (MTA) and S-adenosylhomocysteine (SAH/AdoHcy) to adenine and the corresponding thioribose, 5'-methylthioribose and S-ribosylhomocysteine, respectively. Also cleaves 5'-deoxyadenosine, a toxic by-product of radical S-adenosylmethionine (SAM) enzymes, into 5-deoxyribose and adenine. This Aliivibrio salmonicida (strain LFI1238) (Vibrio salmonicida (strain LFI1238)) protein is 5'-methylthioadenosine/S-adenosylhomocysteine nucleosidase.